We begin with the raw amino-acid sequence, 92 residues long: RNA-binding protein Hfq (92 aa).

Residues D9–V68 form the Sm domain. Residues G73 to Q92 form a disordered region.

The protein belongs to the Hfq family. In terms of assembly, homohexamer.

Functionally, RNA chaperone that binds small regulatory RNA (sRNAs) and mRNAs to facilitate mRNA translational regulation in response to envelope stress, environmental stress and changes in metabolite concentrations. Also binds with high specificity to tRNAs. This chain is RNA-binding protein Hfq, found in Xanthomonas axonopodis pv. citri (strain 306).